Consider the following 123-residue polypeptide: Small ribosomal subunit protein uS12 (123 aa).

The tract at residues 1-28 is disordered; it reads MPTIQQLIRKPRQPKVKRSKSMHLEQCP. Residues 9–21 are compositionally biased toward basic residues; the sequence is RKPRQPKVKRSKS. A 3-methylthioaspartic acid modification is found at D89.

The protein belongs to the universal ribosomal protein uS12 family. As to quaternary structure, part of the 30S ribosomal subunit. Contacts proteins S8 and S17. May interact with IF1 in the 30S initiation complex.

Functionally, with S4 and S5 plays an important role in translational accuracy. Interacts with and stabilizes bases of the 16S rRNA that are involved in tRNA selection in the A site and with the mRNA backbone. Located at the interface of the 30S and 50S subunits, it traverses the body of the 30S subunit contacting proteins on the other side and probably holding the rRNA structure together. The combined cluster of proteins S8, S12 and S17 appears to hold together the shoulder and platform of the 30S subunit. The polypeptide is Small ribosomal subunit protein uS12 (Ruegeria sp. (strain TM1040) (Silicibacter sp.)).